The chain runs to 104 residues: L-rhamnose mutarotase (104 aa).

A substrate-binding site is contributed by Tyr18. His22 (proton donor) is an active-site residue. Substrate is bound by residues Tyr41 and 76–77; that span reads WW.

It belongs to the rhamnose mutarotase family. Homodimer.

It localises to the cytoplasm. The catalysed reaction is alpha-L-rhamnose = beta-L-rhamnose. The protein operates within carbohydrate metabolism; L-rhamnose metabolism. Involved in the anomeric conversion of L-rhamnose. In Bacteroides thetaiotaomicron (strain ATCC 29148 / DSM 2079 / JCM 5827 / CCUG 10774 / NCTC 10582 / VPI-5482 / E50), this protein is L-rhamnose mutarotase.